The chain runs to 542 residues: Glucans biosynthesis protein D (542 aa).

The tat-type signal signal peptide spans 1–31; it reads MHRRNLLKASMAIAAYTGLSATGLLASRAWA.

This sequence belongs to the OpgD/OpgG family. Post-translationally, predicted to be exported by the Tat system. The position of the signal peptide cleavage has not been experimentally proven.

The protein resides in the periplasm. Its pathway is glycan metabolism; osmoregulated periplasmic glucan (OPG) biosynthesis. Functionally, probably involved in the control of the structural glucose backbone of osmoregulated periplasmic glucans (OPGs). The protein is Glucans biosynthesis protein D of Pseudomonas fluorescens (strain Pf0-1).